Here is a 450-residue protein sequence, read N- to C-terminus: Tol-Pal system protein TolB (450 aa).

The signal sequence occupies residues 1–47 (MRKLWAPNWLSAKRHHANQAATRLIGRHALMAWLAAALALSAGAAQA).

It belongs to the TolB family. As to quaternary structure, the Tol-Pal system is composed of five core proteins: the inner membrane proteins TolA, TolQ and TolR, the periplasmic protein TolB and the outer membrane protein Pal. They form a network linking the inner and outer membranes and the peptidoglycan layer.

The protein resides in the periplasm. Part of the Tol-Pal system, which plays a role in outer membrane invagination during cell division and is important for maintaining outer membrane integrity. The protein is Tol-Pal system protein TolB of Cupriavidus pinatubonensis (strain JMP 134 / LMG 1197) (Cupriavidus necator (strain JMP 134)).